The chain runs to 399 residues: 3-sulfinopropanoyl-CoA desulfinase (399 aa).

Residues 121 to 124 (ICIS), S130, and 153 to 156 (YWIT) each bind FAD. 244 to 245 (YN) provides a ligand contact to substrate. FAD is bound by residues R273, Q340, S344, 367 to 371 (GGTAQ), and Q388.

This sequence belongs to the acyl-CoA dehydrogenase family. In terms of assembly, homotrimer or homotetramer. FAD serves as cofactor.

It carries out the reaction 3-sulfinopropanoyl-CoA + H2O = propanoyl-CoA + sulfite + H(+). Functionally, catalyzes the conversion 3-sulfinopropanoyl-CoA (3SP-CoA) to propanoyl-CoA by abstraction of sulfite. Does not show dehydrogenase activity. The sequence is that of 3-sulfinopropanoyl-CoA desulfinase from Variovorax paradoxus.